Consider the following 905-residue polypeptide: MSASVSATTAHHGLPAHEVVLLLESDPYHGLSDGEAAQRLERFGPNTLAVVTRASLLARILRQFHHPLIYVLLVAGTITAGLKEFVDAAVIFGVVVINAIVGFIQESKAEAALQGLRSMVHTHAKVVREGHEHTMPSEELVPGDLVLLAAGDKVPADLRLVRQTGLSVNESALTGESTPVHKDEVALPEGTPVADRRNIAYSGTLVTAGHGAGIVVATGAETELGEIHRLVGAAEVVATPLTAKLAWFSKFLTIAILGLAALTFGVGLLRRQDAVETFTAAIALAVGAIPEGLPTAVTITLAIGMARMAKRRAVIRRLPAVETLGSTTVICADKTGTLTENQMTVQSIWTPHGEIRATGTGYAPDVLLCDTDDAPVPVNANAALRWSLLAGACSNDAALVRDGTRWQIVGDPTEGAMLVVAAKAGFNPERLATTLPQVAAIPFSSERQYMATLHRDGTDHVVLAKGAVERMLDLCGTEMGADGALRPLDRATVLRATEMLTSRGLRVLATGMGAGAGTPDDFDENVIPGSLALTGLQAMSDPPRAAAASAVAACHSAGIAVKMITGDHAGTATAIATEVGLLDNTEPAAGSVLTGAELAALSADQYPEAVDTASVFARVSPEQKLRLVQALQARGHVVAMTGDGVNDAPALRQANIGVAMGRGGTEVAKDAADMVLTDDDFATIEAAVEEGRGVFDNLTKFITWTLPTNLGEGLVILAAIAVGVALPILPTQILWINMTTAIALGLMLAFEPKEAGIMTRPPRDPDQPLLTGWLVRRTLLVSTLLVASAWWLFAWELDNGAGLHEARTAALNLFVVVEAFYLFSCRSLTRSAWRLGMFANRWIILGVSAQAIAQFAITYLPAMNMVFDTAPIDIGVWVRIFAVATAITIVVATDTLLPRIRAQPP.

The next 3 helical transmembrane spans lie at 84-104 (EFVD…VGFI), 248-268 (FSKF…GVGL), and 283-303 (ALAV…TLAI). Catalysis depends on Asp333, which acts as the 4-aspartylphosphate intermediate. Mg(2+) is bound by residues Asp643 and Asp647. Transmembrane regions (helical) follow at residues 716–736 (ILAA…ILWI), 738–758 (MTTA…AGIM), 778–798 (TLLV…WELD), 808–828 (TAAL…CRSL), 842–862 (WIIL…YLPA), and 872–892 (IDIG…IVVA).

It belongs to the cation transport ATPase (P-type) (TC 3.A.3) family. Type IIA subfamily.

It localises to the cell membrane. It catalyses the reaction ATP + H2O = ADP + phosphate + H(+). The polypeptide is Probable cation-transporting ATPase F (ctpF) (Mycobacterium bovis (strain ATCC BAA-935 / AF2122/97)).